Reading from the N-terminus, the 343-residue chain is Holliday junction branch migration complex subunit RuvB (343 aa).

A large ATPase domain (RuvB-L) region spans residues 4-193 (TDNLTAAQPQ…FGIVSRLEFY (190 aa)). ATP contacts are provided by residues Leu-32, Arg-33, Gly-74, Lys-77, Thr-78, Thr-79, 140–142 (EDY), Arg-183, Tyr-193, and Arg-230. Thr-78 serves as a coordination point for Mg(2+). The small ATPAse domain (RuvB-S) stretch occupies residues 194 to 264 (ENRDLTTIVS…IADAALSMLD (71 aa)). The interval 267–343 (AQGLDVMDRK…YLHFGLPVEK (77 aa)) is head domain (RuvB-H). Residues Arg-322 and Arg-327 each contribute to the DNA site.

Belongs to the RuvB family. As to quaternary structure, homohexamer. Forms an RuvA(8)-RuvB(12)-Holliday junction (HJ) complex. HJ DNA is sandwiched between 2 RuvA tetramers; dsDNA enters through RuvA and exits via RuvB. An RuvB hexamer assembles on each DNA strand where it exits the tetramer. Each RuvB hexamer is contacted by two RuvA subunits (via domain III) on 2 adjacent RuvB subunits; this complex drives branch migration. In the full resolvosome a probable DNA-RuvA(4)-RuvB(12)-RuvC(2) complex forms which resolves the HJ.

The protein localises to the cytoplasm. The catalysed reaction is ATP + H2O = ADP + phosphate + H(+). In terms of biological role, the RuvA-RuvB-RuvC complex processes Holliday junction (HJ) DNA during genetic recombination and DNA repair, while the RuvA-RuvB complex plays an important role in the rescue of blocked DNA replication forks via replication fork reversal (RFR). RuvA specifically binds to HJ cruciform DNA, conferring on it an open structure. The RuvB hexamer acts as an ATP-dependent pump, pulling dsDNA into and through the RuvAB complex. RuvB forms 2 homohexamers on either side of HJ DNA bound by 1 or 2 RuvA tetramers; 4 subunits per hexamer contact DNA at a time. Coordinated motions by a converter formed by DNA-disengaged RuvB subunits stimulates ATP hydrolysis and nucleotide exchange. Immobilization of the converter enables RuvB to convert the ATP-contained energy into a lever motion, pulling 2 nucleotides of DNA out of the RuvA tetramer per ATP hydrolyzed, thus driving DNA branch migration. The RuvB motors rotate together with the DNA substrate, which together with the progressing nucleotide cycle form the mechanistic basis for DNA recombination by continuous HJ branch migration. Branch migration allows RuvC to scan DNA until it finds its consensus sequence, where it cleaves and resolves cruciform DNA. The sequence is that of Holliday junction branch migration complex subunit RuvB from Neisseria meningitidis serogroup C (strain 053442).